A 176-amino-acid polypeptide reads, in one-letter code: Ribosome rescue factor SmrB (176 aa).

The 76-residue stretch at 93–168 folds into the Smr domain; sequence LDLHGYRQSE…GDAALLVLID (76 aa).

Belongs to the SmrB family. In terms of assembly, associates with collided ribosomes, but not with correctly translating polysomes.

Functionally, acts as a ribosome collision sensor. Detects stalled/collided disomes (pairs of ribosomes where the leading ribosome is stalled and a second ribosome has collided with it) and endonucleolytically cleaves mRNA at the 5' boundary of the stalled ribosome. Stalled/collided disomes form a new interface (primarily via the 30S subunits) that binds SmrB. Cleaved mRNA becomes available for tmRNA ligation, leading to ribosomal subunit dissociation and rescue of stalled ribosomes. The chain is Ribosome rescue factor SmrB from Shewanella sp. (strain MR-4).